The following is a 519-amino-acid chain: U3 small nucleolar RNA-associated protein 15 homolog (519 aa).

Ala2 is modified (N-acetylalanine). WD repeat units lie at residues 36-75, 78-117, 120-159, 162-202, 204-242, 246-285, and 287-326; these read KEFGAVSKVDFSPQPPYNYAVTASSRIHIYGRYSQEPIKT, RFKDTAYCATFRQDGRLLVAGSEDGGVQLFDISGRAPLRQ, GHTKAVHSVDFTADKYHVVSGADDYTVKLWDIPNSKEILT, EHSD…SVIS, EHGQPVESVLLFPSGGLLVSAGGRYVKVWDMLKGGQLLV, NHHKTVTCLCLSSSGQRLLSGSLDRKVKVYSTTSYKVVHS, and DYTASILSLALAHEDETIVVGMTNGILSVKHRKSEAKKDS. Residue Lys249 forms a Glycyl lysine isopeptide (Lys-Gly) (interchain with G-Cter in SUMO2) linkage.

Part of the small subunit (SSU) processome, composed of more than 70 proteins and the RNA chaperone small nucleolar RNA (snoRNA) U3. May be a component of the proposed t-UTP subcomplex of the ribosomal small subunit (SSU) processome containing at least UTP4, WDR43, HEATR1, UTP15, WDR75. Interacts directly with UTP4 and WDR43.

It is found in the nucleus. The protein resides in the nucleolus. In terms of biological role, ribosome biogenesis factor. Involved in nucleolar processing of pre-18S ribosomal RNA. Required for optimal pre-ribosomal RNA transcription by RNA polymerase I. Part of the small subunit (SSU) processome, first precursor of the small eukaryotic ribosomal subunit. During the assembly of the SSU processome in the nucleolus, many ribosome biogenesis factors, an RNA chaperone and ribosomal proteins associate with the nascent pre-rRNA and work in concert to generate RNA folding, modifications, rearrangements and cleavage as well as targeted degradation of pre-ribosomal RNA by the RNA exosome. The sequence is that of U3 small nucleolar RNA-associated protein 15 homolog from Bos taurus (Bovine).